We begin with the raw amino-acid sequence, 473 residues long: Ribulose bisphosphate carboxylase large chain 1 (473 aa).

The substrate site is built by N116 and T166. K168 serves as the catalytic Proton acceptor. K170 contributes to the substrate binding site. 3 residues coordinate Mg(2+): K194, D196, and E197. An N6-carboxylysine modification is found at K194. Catalysis depends on H287, which acts as the Proton acceptor. Substrate contacts are provided by R288, H320, and S372.

Belongs to the RuBisCO large chain family. Type I subfamily. In terms of assembly, heterohexadecamer of 8 large chains and 8 small chains. Mg(2+) serves as cofactor.

It catalyses the reaction 2 (2R)-3-phosphoglycerate + 2 H(+) = D-ribulose 1,5-bisphosphate + CO2 + H2O. The catalysed reaction is D-ribulose 1,5-bisphosphate + O2 = 2-phosphoglycolate + (2R)-3-phosphoglycerate + 2 H(+). In terms of biological role, ruBisCO catalyzes two reactions: the carboxylation of D-ribulose 1,5-bisphosphate, the primary event in carbon dioxide fixation, as well as the oxidative fragmentation of the pentose substrate. Both reactions occur simultaneously and in competition at the same active site. The polypeptide is Ribulose bisphosphate carboxylase large chain 1 (Acidithiobacillus ferrooxidans (strain ATCC 23270 / DSM 14882 / CIP 104768 / NCIMB 8455) (Ferrobacillus ferrooxidans (strain ATCC 23270))).